The primary structure comprises 445 residues: uncharacterized protein (445 aa).

Zn(2+) is bound at residue His66. The Proton acceptor role is filled by Glu69. Zn(2+) is bound by residues His70 and Glu146. A disordered region spans residues 232–251 (GRQSAPPRKSTGRINGGPAL).

The protein belongs to the peptidase M16 family. Requires Zn(2+) as cofactor.

This is an uncharacterized protein from Mycobacterium leprae (strain TN).